We begin with the raw amino-acid sequence, 144 residues long: 3-hydroxyacyl-[acyl-carrier-protein] dehydratase FabZ (144 aa).

Residue H51 is part of the active site.

This sequence belongs to the thioester dehydratase family. FabZ subfamily.

The protein resides in the cytoplasm. It catalyses the reaction a (3R)-hydroxyacyl-[ACP] = a (2E)-enoyl-[ACP] + H2O. Its function is as follows. Involved in unsaturated fatty acids biosynthesis. Catalyzes the dehydration of short chain beta-hydroxyacyl-ACPs and long chain saturated and unsaturated beta-hydroxyacyl-ACPs. In Clostridium botulinum (strain Langeland / NCTC 10281 / Type F), this protein is 3-hydroxyacyl-[acyl-carrier-protein] dehydratase FabZ.